Here is a 309-residue protein sequence, read N- to C-terminus: Putative pyridoxal kinase C6F6.11c (309 aa).

2 residues coordinate substrate: Ser12 and Tyr123. ATP contacts are provided by residues 182-183 (SS) and 209-221 (LIPV…RGTG). Asp222 contributes to the substrate binding site.

It belongs to the pyridoxine kinase family. A divalent metal cation serves as cofactor.

The protein resides in the cytoplasm. Its subcellular location is the nucleus. It carries out the reaction pyridoxal + ATP = pyridoxal 5'-phosphate + ADP + H(+). Required for synthesis of pyridoxal-5-phosphate from vitamin B6. The protein is Putative pyridoxal kinase C6F6.11c of Schizosaccharomyces pombe (strain 972 / ATCC 24843) (Fission yeast).